The chain runs to 348 residues: L-threonine 3-dehydrogenase (348 aa).

Residue C38 coordinates Zn(2+). Active-site charge relay system residues include T40 and H43. H63, E64, C93, C96, C99, and C107 together coordinate Zn(2+). NAD(+)-binding positions include I175, D195, R200, 263 to 265 (LGI), and 287 to 288 (IY).

This sequence belongs to the zinc-containing alcohol dehydrogenase family. Homotetramer. Requires Zn(2+) as cofactor.

The protein resides in the cytoplasm. The enzyme catalyses L-threonine + NAD(+) = (2S)-2-amino-3-oxobutanoate + NADH + H(+). The protein operates within amino-acid degradation; L-threonine degradation via oxydo-reductase pathway; glycine from L-threonine: step 1/2. Catalyzes the NAD(+)-dependent oxidation of L-threonine to 2-amino-3-ketobutyrate. This chain is L-threonine 3-dehydrogenase, found in Deinococcus radiodurans (strain ATCC 13939 / DSM 20539 / JCM 16871 / CCUG 27074 / LMG 4051 / NBRC 15346 / NCIMB 9279 / VKM B-1422 / R1).